Consider the following 171-residue polypeptide: CDP-archaeol synthase (171 aa).

The next 5 membrane-spanning stretches (helical) occupy residues 7-27, 54-74, 84-104, 115-135, and 141-161; these read IFWA…PVLV, GFIG…FITP, VKLA…GSFI, PAIG…AYPV, and GQII…NYFA.

It belongs to the CDP-archaeol synthase family. Requires Mg(2+) as cofactor.

It is found in the cell membrane. The catalysed reaction is 2,3-bis-O-(geranylgeranyl)-sn-glycerol 1-phosphate + CTP + H(+) = CDP-2,3-bis-O-(geranylgeranyl)-sn-glycerol + diphosphate. It participates in membrane lipid metabolism; glycerophospholipid metabolism. Catalyzes the formation of CDP-2,3-bis-(O-geranylgeranyl)-sn-glycerol (CDP-archaeol) from 2,3-bis-(O-geranylgeranyl)-sn-glycerol 1-phosphate (DGGGP) and CTP. This reaction is the third ether-bond-formation step in the biosynthesis of archaeal membrane lipids. The polypeptide is CDP-archaeol synthase (Thermococcus kodakarensis (strain ATCC BAA-918 / JCM 12380 / KOD1) (Pyrococcus kodakaraensis (strain KOD1))).